The chain runs to 163 residues: Protein YtsP (163 aa).

This sequence belongs to the free Met sulfoxide reductase family.

In Bacillus subtilis (strain 168), this protein is Protein YtsP (ytsP).